The primary structure comprises 575 residues: Proline--tRNA ligase (575 aa).

The protein belongs to the class-II aminoacyl-tRNA synthetase family. ProS type 1 subfamily. As to quaternary structure, homodimer.

Its subcellular location is the cytoplasm. It carries out the reaction tRNA(Pro) + L-proline + ATP = L-prolyl-tRNA(Pro) + AMP + diphosphate. Functionally, catalyzes the attachment of proline to tRNA(Pro) in a two-step reaction: proline is first activated by ATP to form Pro-AMP and then transferred to the acceptor end of tRNA(Pro). As ProRS can inadvertently accommodate and process non-cognate amino acids such as alanine and cysteine, to avoid such errors it has two additional distinct editing activities against alanine. One activity is designated as 'pretransfer' editing and involves the tRNA(Pro)-independent hydrolysis of activated Ala-AMP. The other activity is designated 'posttransfer' editing and involves deacylation of mischarged Ala-tRNA(Pro). The misacylated Cys-tRNA(Pro) is not edited by ProRS. This is Proline--tRNA ligase from Solidesulfovibrio magneticus (strain ATCC 700980 / DSM 13731 / RS-1) (Desulfovibrio magneticus).